The primary structure comprises 672 residues: uncharacterized protein (672 aa).

Positions 1 to 10 are enriched in basic and acidic residues; it reads MAKSDGDDPL. The interval 1–41 is disordered; sequence MAKSDGDDPLRPASPRLRSSRRHSLRYSAYTGGPDPLAPPV.

This is an uncharacterized protein from Mycobacterium bovis (strain ATCC BAA-935 / AF2122/97).